A 182-amino-acid polypeptide reads, in one-letter code: LIM domain-containing protein C (182 aa).

LIM zinc-binding domains are found at residues 3–63 (SICP…LFRQ) and 110–170 (TNCP…KFGP).

It localises to the cell projection. The protein localises to the pseudopodium. Its subcellular location is the cytoplasm. It is found in the cell cortex. The protein resides in the cytoskeleton. Its function is as follows. Binds to F-actin and may modulate the chemotactic response during early development and contribute to the maintenance of the strength of the actin cytoskeleton. This Dictyostelium discoideum (Social amoeba) protein is LIM domain-containing protein C (limC).